The sequence spans 129 residues: Fluoride-specific ion channel FluC (129 aa).

The next 4 membrane-spanning stretches (helical) occupy residues 1–21, 35–55, 71–91, and 105–125; these read MLMKQVSAFLLVGIGGFLGSA, GGLPLATFSVNIIGCFFIGFI, LFLVTGFCGGFTTFSSYIFEN, and AYLAGSVIGGFVALYSGTFFA. Residues G79 and T82 each coordinate Na(+).

It belongs to the fluoride channel Fluc/FEX (TC 1.A.43) family.

It localises to the cell inner membrane. It catalyses the reaction fluoride(in) = fluoride(out). Na(+) is not transported, but it plays an essential structural role and its presence is essential for fluoride channel function. In terms of biological role, fluoride-specific ion channel. Important for reducing fluoride concentration in the cell, thus reducing its toxicity. This Chlorobium phaeobacteroides (strain DSM 266 / SMG 266 / 2430) protein is Fluoride-specific ion channel FluC.